A 526-amino-acid polypeptide reads, in one-letter code: Keratin, type I cytoskeletal 10 (526 aa).

Residues 1 to 15 (MSVRYSSSKQYSSSR) show a composition bias toward low complexity. The segment at 1–29 (MSVRYSSSKQYSSSRSGGGGGGGSSLRIS) is disordered. Residues 1 to 126 (MSVRYSSSKQ…FGDGGLISGN (126 aa)) form a head region. Serine 14, serine 16, serine 34, serine 45, serine 48, and serine 151 each carry phosphoserine. The interval 127–162 (QKITMQNLNDRLASYLDKVRALEESNYELEVKIKEW) is coil 1A. The 315-residue stretch at 127 to 441 (QKITMQNLND…SLLEGEGSSG (315 aa)) folds into the IF rod domain. The tract at residues 163–183 (YEKYGNSRQREPRDYSKYYQT) is linker 1. The tract at residues 184 to 275 (IDDLKNQIFN…KNHEEEMRDL (92 aa)) is coil 1B. A linker 12 region spans residues 276-298 (QNVSTGDVNVEMNAAPGVDLTEL). The interval 299–437 (LNNMRSQYEQ…QTYRSLLEGE (139 aa)) is coil 2. The interval 438–526 (GSSGGGSYGG…GESSSKGPRY (89 aa)) is tail. A compositionally biased stretch (gly residues) spans 458–505 (GGGGYGGGSSSGGYGGGSSSGGGHGGSSGGSYGGGSSSGGGHGGGSSS). Residues 458–526 (GGGGYGGGSS…GESSSKGPRY (69 aa)) are disordered. Over residues 506–526 (GGHKSTTTGSVGESSSKGPRY) the composition is skewed to low complexity.

It belongs to the intermediate filament family. In terms of assembly, heterotetramer of two type I and two type II keratins. Heterodimer with KRT1. Two heterodimers of KRT1 and KRT10 form a heterotetramer. The KRT10 subunit in the heterotetramer is probably disulfide-linked.

The protein resides in the secreted. The protein localises to the extracellular space. It localises to the cell surface. It is found in the cytoplasm. Functionally, plays a role in the establishment of the epidermal barrier on plantar skin. Involved in the maintenance of cell layer development and keratin filament bundles in suprabasal cells of the epithelium. The polypeptide is Keratin, type I cytoskeletal 10 (KRT10) (Bos taurus (Bovine)).